Reading from the N-terminus, the 187-residue chain is Elongation factor P (187 aa).

The protein belongs to the elongation factor P family.

The protein localises to the cytoplasm. It functions in the pathway protein biosynthesis; polypeptide chain elongation. Functionally, involved in peptide bond synthesis. Stimulates efficient translation and peptide-bond synthesis on native or reconstituted 70S ribosomes in vitro. Probably functions indirectly by altering the affinity of the ribosome for aminoacyl-tRNA, thus increasing their reactivity as acceptors for peptidyl transferase. The polypeptide is Elongation factor P (Corynebacterium kroppenstedtii (strain DSM 44385 / JCM 11950 / CIP 105744 / CCUG 35717)).